A 273-amino-acid polypeptide reads, in one-letter code: DNA repair protein RecO (273 aa).

This sequence belongs to the RecO family.

Involved in DNA repair and RecF pathway recombination. In Mycolicibacterium gilvum (strain PYR-GCK) (Mycobacterium gilvum (strain PYR-GCK)), this protein is DNA repair protein RecO.